The following is an 881-amino-acid chain: Protein P (881 aa).

The terminal protein domain (TP) stretch occupies residues 1–184 (MHPFYQLFRN…GKPYSWEHRQ (184 aa)). The interval 185–384 (LEQHNGQQHK…YCLHHIVSSI (200 aa)) is spacer. Positions 263 to 351 (IPCESKAPSE…PAGICRGTES (89 aa)) are disordered. Composition is skewed to polar residues over residues 270–279 (PSEQQQSSLR) and 287–314 (NQIQ…IQSG). The segment covering 326 to 340 (FERHTPSFDNEKSDR) has biased composition (basic and acidic residues). Residues 385–726 (DDWGPCTFDG…YGELWPVARQ (342 aa)) form a polymerase/reverse transcriptase domain (RT) region. Residues 395–636 (DVTIRSPRTP…HTLHFMGYTI (242 aa)) enclose the Reverse transcriptase domain. Mg(2+) contacts are provided by D467, D587, and D588.

It belongs to the hepadnaviridae P protein family.

The catalysed reaction is DNA(n) + a 2'-deoxyribonucleoside 5'-triphosphate = DNA(n+1) + diphosphate. It carries out the reaction Endonucleolytic cleavage to 5'-phosphomonoester.. With respect to regulation, activated by host HSP70 and HSP40 in vitro to be able to bind the epsilon loop of the pgRNA. Because deletion of the RNase H region renders the protein partly chaperone-independent, the chaperones may be needed indirectly to relieve occlusion of the RNA-binding site by this domain. Inhibited by several reverse-transcriptase inhibitors: Lamivudine, Adefovir and Entecavir. Functionally, multifunctional enzyme that converts the viral RNA genome into dsDNA in viral cytoplasmic capsids. This enzyme displays a DNA polymerase activity that can copy either DNA or RNA templates, and a ribonuclease H (RNase H) activity that cleaves the RNA strand of RNA-DNA heteroduplexes in a partially processive 3'- to 5'-endonucleasic mode. Neo-synthesized pregenomic RNA (pgRNA) are encapsidated together with the P protein, and reverse-transcribed inside the nucleocapsid. Initiation of reverse-transcription occurs first by binding the epsilon loop on the pgRNA genome, and is initiated by protein priming, thereby the 5'-end of (-)DNA is covalently linked to P protein. Partial (+)DNA is synthesized from the (-)DNA template and generates the relaxed circular DNA (RC-DNA) genome. After budding and infection, the RC-DNA migrates in the nucleus, and is converted into a plasmid-like covalently closed circular DNA (cccDNA). The activity of P protein does not seem to be necessary for cccDNA generation, and is presumably released from (+)DNA by host nuclear DNA repair machinery. This chain is Protein P, found in Ground squirrel hepatitis virus (strain 27) (GSHV).